The chain runs to 486 residues: uncharacterized protein (486 aa).

Residues 18-38 (TLLQLFVFTVICVFVLSGLAI) form a helical membrane-spanning segment. Over residues 62-79 (DRQKQMEKQQDSGEKRSF) the composition is skewed to basic and acidic residues. Disordered regions lie at residues 62 to 82 (DRQK…FEST) and 117 to 147 (IESS…GPQM). Residues 119-132 (SSSSSDSSSSSSSS) are compositionally biased toward low complexity. 3 helical membrane-spanning segments follow: residues 324-344 (VVYL…MMSI), 365-385 (IGQF…LASV), and 451-471 (MLIL…LPSI).

This sequence belongs to the ABC-4 integral membrane protein family.

It is found in the cell membrane. This is an uncharacterized protein from Bacillus subtilis (strain 168).